We begin with the raw amino-acid sequence, 177 residues long: Chorismate pyruvate-lyase (177 aa).

Residues M37, R79, L117, and E159 each contribute to the substrate site.

The protein belongs to the UbiC family. Monomer.

It localises to the cytoplasm. It catalyses the reaction chorismate = 4-hydroxybenzoate + pyruvate. It functions in the pathway cofactor biosynthesis; ubiquinone biosynthesis. In terms of biological role, removes the pyruvyl group from chorismate, with concomitant aromatization of the ring, to provide 4-hydroxybenzoate (4HB) for the ubiquinone pathway. This chain is Chorismate pyruvate-lyase, found in Sodalis glossinidius (strain morsitans).